The sequence spans 133 residues: Thioredoxin-2, mitochondrial (133 aa).

The N-terminal 29 residues, 1–29, are a transit peptide targeting the mitochondrion; it reads MRGFIANSLKPHMRSFALRRSFTSSRILR. A Thioredoxin domain is found at 30–133; the sequence is KVNAVESFGD…LSSLLAKYQE (104 aa). Catalysis depends on nucleophile residues cysteine 59 and cysteine 62. A disulfide bridge connects residues cysteine 59 and cysteine 62.

Belongs to the thioredoxin family. Interacts with arg3.

Its subcellular location is the mitochondrion. In terms of biological role, disulfide reductase which serves multiple functions in mitochondria, protecting mitochondrial components against thiol-oxidative damage as a thiol-disulfide oxidoreductase, and supporting urea cycle and respiration in mitochondria in a manner independent of active site thiols. This Schizosaccharomyces pombe (strain 972 / ATCC 24843) (Fission yeast) protein is Thioredoxin-2, mitochondrial (trx2).